Consider the following 652-residue polypeptide: Zinc finger protein 503 (652 aa).

Positions 1–11 are enriched in polar residues; it reads MSTAPSLSALR. Residues 1–72 form a disordered region; the sequence is MSTAPSLSAL…HAVPPSDPLR (72 aa). Over residues 16–32 the composition is skewed to gly residues; it reads SGGGGGGGGGGGSGGGS. Phosphoserine is present on Ser-107. Disordered regions lie at residues 126 to 283 and 296 to 338; these read SQIG…GVPA and INVD…SSVL. The span at 135–144 shows a compositional bias: low complexity; that stretch reads PSSKLSSVAS. Composition is skewed to gly residues over residues 145–157 and 194–209; these read NGGG…NGAG and GGGG…GGGV. Lys-213 carries the N6-acetyllysine modification. Residues 221–230 are compositionally biased toward polar residues; the sequence is ATCQPFTPRT. Residues 231-244 are compositionally biased toward low complexity; it reads GSPSSSASACSPGG. 2 positions are modified to phosphoserine: Ser-235 and Ser-241. The span at 254–263 shows a compositional bias: basic and acidic residues; the sequence is EGKDDKKDPE. The span at 264-283 shows a compositional bias: gly residues; the sequence is AGGGGSSKGSGGASADGVPA. Residues 314–336 show a composition bias toward low complexity; it reads GSDCGGSSSSSSGSGPSAPTSSS. The C2H2-type zinc finger occupies 520-548; it reads HICNWVSANGPCDKRFATSEELLSHLRTH. Arg-642 carries the post-translational modification Omega-N-methylarginine.

It belongs to the Elbow/Noc family.

Its subcellular location is the nucleus. Functionally, may function as a transcriptional repressor. The protein is Zinc finger protein 503 (Znf503) of Mus musculus (Mouse).